A 336-amino-acid polypeptide reads, in one-letter code: UPF0324 membrane protein BR0028/BS1330_I0028 (336 aa).

Transmembrane regions (helical) follow at residues 9–26 (ILPG…AMVL), 36–55 (RAWL…VRSL), 68–90 (FSAK…ASAV), 94–116 (GSGL…YGIG), 128–150 (LVAC…VIGA), 160–182 (AFTA…LLGL), 189–211 (ILAG…VSLL), 221–240 (LVRV…ISGN), 247–269 (PGFF…LHSL), 279–301 (AIQY…GVDI), and 313–335 (LTAI…MLGV).

It belongs to the UPF0324 family.

The protein resides in the cell membrane. This Brucella suis biovar 1 (strain 1330) protein is UPF0324 membrane protein BR0028/BS1330_I0028.